A 1027-amino-acid polypeptide reads, in one-letter code: Scavenger receptor cysteine-rich domain-containing protein SCART1 (1027 aa).

The first 19 residues, Met1–Ala19, serve as a signal peptide directing secretion. Residues Val20–Ser906 lie on the Extracellular side of the membrane. The 101-residue stretch at Leu28–Ser128 folds into the SRCR 1 domain. 3 disulfides stabilise this stretch: Cys53–Cys117, Cys66–Cys127, and Cys97–Cys107. A glycan (N-linked (GlcNAc...) asparagine) is linked at Asn94. N-linked (GlcNAc...) asparagine glycosylation occurs at Asn129. 7 SRCR domains span residues Leu135–Ser227, Ala232–Ser326, Phe328–Ser428, Leu434–Ser534, Leu555–Ser656, Leu661–Ser761, and Leu786–Trp886. Disulfide bonds link Cys160–Cys216, Cys171–Cys226, Cys196–Cys206, Cys253–Cys315, Cys266–Cys325, and Cys297–Cys307. The N-linked (GlcNAc...) asparagine glycan is linked to Asn332. 7 disulfides stabilise this stretch: Cys353–Cys417, Cys366–Cys427, Cys397–Cys407, Cys472–Cys533, Cys503–Cys513, Cys594–Cys655, and Cys625–Cys635. 2 cysteine pairs are disulfide-bonded: Cys824–Cys885 and Cys855–Cys865. Residues Val907–Pro927 traverse the membrane as a helical segment. The Cytoplasmic portion of the chain corresponds to Arg928–Leu1027.

In terms of tissue distribution, mainly expressed by CD4(+) and CD8(+) T lymphocytes. Also highly expressed in small intestine and colon. Expressed (at protein level) in small intestine, stomach, gall bladder, and placental villi.

It is found in the membrane. In terms of biological role, may play a role in the immune system, perhaps as a co-receptor on alphabeta and gammadelta T-cells. The protein is Scavenger receptor cysteine-rich domain-containing protein SCART1 of Homo sapiens (Human).